The sequence spans 396 residues: Probable glucan endo-1,6-beta-glucosidase B (396 aa).

Positions 1–17 are cleaved as a signal peptide; the sequence is MIRRLAAFSALSGLATA. N-linked (GlcNAc...) asparagine glycosylation occurs at N30. E219 acts as the Proton donor in catalysis. N272 carries an N-linked (GlcNAc...) asparagine glycan. E320 functions as the Nucleophile in the catalytic mechanism.

Belongs to the glycosyl hydrolase 5 (cellulase A) family.

The protein resides in the secreted. The enzyme catalyses Random hydrolysis of (1-&gt;6)-linkages in (1-&gt;6)-beta-D-glucans.. Beta-glucanases participate in the metabolism of beta-glucan, the main structural component of the cell wall. Acts on lutean, pustulan and 1,6-oligo-beta-D-glucosides. The chain is Probable glucan endo-1,6-beta-glucosidase B (exgB) from Aspergillus fumigatus (strain ATCC MYA-4609 / CBS 101355 / FGSC A1100 / Af293) (Neosartorya fumigata).